A 514-amino-acid chain; its full sequence is L-threonine dehydratase biosynthetic IlvA (514 aa).

The residue at position 62 (Lys62) is an N6-(pyridoxal phosphate)lysine. Pyridoxal 5'-phosphate-binding positions include Asn89, 188-192, and Ser315; that span reads GGGGL. ACT-like domains follow at residues 339–411 and 434–504; these read ALLA…DLSD and RLYS…DETN.

The protein belongs to the serine/threonine dehydratase family. As to quaternary structure, homotetramer. Requires pyridoxal 5'-phosphate as cofactor.

It catalyses the reaction L-threonine = 2-oxobutanoate + NH4(+). It functions in the pathway amino-acid biosynthesis; L-isoleucine biosynthesis; 2-oxobutanoate from L-threonine: step 1/1. Its activity is regulated as follows. Isoleucine allosterically inhibits whereas valine allosterically activates this enzyme. Functionally, catalyzes the anaerobic formation of alpha-ketobutyrate and ammonia from threonine in a two-step reaction. The first step involved a dehydration of threonine and a production of enamine intermediates (aminocrotonate), which tautomerizes to its imine form (iminobutyrate). Both intermediates are unstable and short-lived. The second step is the nonenzymatic hydrolysis of the enamine/imine intermediates to form 2-ketobutyrate and free ammonia. In the low water environment of the cell, the second step is accelerated by RidA. The sequence is that of L-threonine dehydratase biosynthetic IlvA (ilvA) from Escherichia coli (strain K12).